The following is a 232-amino-acid chain: Ribonuclease 3 (232 aa).

The RNase III domain occupies 10-135; it reads ALKIYEATGY…LIGAMYMDGG (126 aa). Glu-48 contributes to the Mg(2+) binding site. Residue Asp-52 is part of the active site. Positions 121 and 124 each coordinate Mg(2+). Glu-124 is a catalytic residue. The 70-residue stretch at 161–230 folds into the DRBM domain; sequence DPKTALQEWV…AKLMLKKITE (70 aa).

The protein belongs to the ribonuclease III family. Homodimer. Mg(2+) serves as cofactor.

It is found in the cytoplasm. The catalysed reaction is Endonucleolytic cleavage to 5'-phosphomonoester.. Digests double-stranded RNA. Involved in the processing of primary rRNA transcript to yield the immediate precursors to the large and small rRNAs (23S and 16S). Processes some mRNAs, and tRNAs when they are encoded in the rRNA operon. Processes pre-crRNA and tracrRNA of type II CRISPR loci if present in the organism. This Anaplasma marginale (strain Florida) protein is Ribonuclease 3.